A 199-amino-acid chain; its full sequence is Pyridoxine/pyridoxamine 5'-phosphate oxidase (199 aa).

FMN contacts are provided by residues 44–49 (RTVLLK), 59–60 (YT), lysine 66, and glutamine 91. Lysine 49 serves as a coordination point for substrate. Positions 109, 113, and 117 each coordinate substrate. FMN contacts are provided by residues 126 to 127 (QS) and tryptophan 171. 177–179 (RLH) serves as a coordination point for substrate. An FMN-binding site is contributed by arginine 181.

Belongs to the pyridoxamine 5'-phosphate oxidase family. Homodimer. FMN is required as a cofactor.

The enzyme catalyses pyridoxamine 5'-phosphate + O2 + H2O = pyridoxal 5'-phosphate + H2O2 + NH4(+). The catalysed reaction is pyridoxine 5'-phosphate + O2 = pyridoxal 5'-phosphate + H2O2. The protein operates within cofactor metabolism; pyridoxal 5'-phosphate salvage; pyridoxal 5'-phosphate from pyridoxamine 5'-phosphate: step 1/1. It functions in the pathway cofactor metabolism; pyridoxal 5'-phosphate salvage; pyridoxal 5'-phosphate from pyridoxine 5'-phosphate: step 1/1. Catalyzes the oxidation of either pyridoxine 5'-phosphate (PNP) or pyridoxamine 5'-phosphate (PMP) into pyridoxal 5'-phosphate (PLP). This Xanthomonas axonopodis pv. citri (strain 306) protein is Pyridoxine/pyridoxamine 5'-phosphate oxidase.